Reading from the N-terminus, the 264-residue chain is MKAVVLALAVLFLTGSQARHFWQQDDPQSPWDRVKDFATVYVDAVKDSGRDYVSQFESSALGKQLNLHLLDNWDTLSNTVGRLREQLGPVTHEFWANLEKDTEWLRQEMNKDLEEVKVKVQPYLDDFQKKWQEEVERYREKVGPLGAELREGARQKLQELHEKLTPLGEDLRDRARVHVDALRTQLAPYSDQMRERLATRLAAIRDSPSLAVYHAKASEHLKTLSEKAKPALEDLRQGLMPVLENLKTTVLAAIDEASKKLNAQ.

The N-terminal stretch at 1–18 (MKAVVLALAVLFLTGSQA) is a signal peptide. 2 repeat units span residues 67 to 88 (LHLLDNWDTLSNTVGRLREQLG) and 89 to 110 (PVTHEFWANLEKDTEWLRQEMN). The tract at residues 67-264 (LHLLDNWDTL…DEASKKLNAQ (198 aa)) is 10 X approximate tandem repeats. Methionine sulfoxide is present on Met-109. The stretch at 111-121 (KDLEEVKVKVQ) is one 3; half-length repeat. A run of 5 repeats spans residues 122-143 (PYLDDFQKKWQEEVERYREKVG), 144-165 (PLGAELREGARQKLQELHEKLT), 166-187 (PLGEDLRDRARVHVDALRTQLA), 188-207 (PYSDQMRERLATRLAAIRDS), and 208-229 (PSLAVYHAKASEHLKTLSEKAK). Residues 230 to 240 (PALEDLRQGLM) form a 9; half-length repeat. Residues 241–264 (PVLENLKTTVLAAIDEASKKLNAQ) form repeat 10.

Belongs to the apolipoprotein A1/A4/E family. Homodimer. Interacts with APOA1BP and CLU. Component of a sperm activating protein complex (SPAP), consisting of APOA1, an immunoglobulin heavy chain, an immunoglobulin light chain and albumin. Interacts with NDRG1. Interacts with SCGB3A2. Interacts with NAXE and YJEFN3. Post-translationally, glycosylated. Palmitoylated. In terms of processing, phosphorylation sites are present in the extracellular medium.

The protein resides in the secreted. Functionally, participates in the reverse transport of cholesterol from tissues to the liver for excretion by promoting cholesterol efflux from tissues and by acting as a cofactor for the lecithin cholesterol acyltransferase (LCAT). As part of the SPAP complex, activates spermatozoa motility. The chain is Apolipoprotein A-I (APOA1) from Jaculus jaculus (Lesser Egyptian jerboa).